The sequence spans 2481 residues: Serine/threonine-protein kinase TOR (2481 aa).

The segment at 1–31 (MSTSSQSFVAGRPASMASPSQSHRFCGPSAT) is disordered. HEAT repeat units lie at residues 205 to 242 (VHVPEFVDAIWVALRDPQLQVRERAVEALRACLRVIEK), 292 to 329 (SRYREVAEIVLRYLEHRDRLVRLSITSLLPRIAHFLRD), 373 to 410 (HYLPTIMSHLRDAIAPRKGRPLLEAVACVGNIAKAMGS), 434 to 471 (DALDQITISIPSLLPTVQDRLLDCISLVLSKSHYSQAK), 569 to 607 (RLVEEIVEKLLRTAVADADVTVRKSIFVALFGNQCFDDY), 608 to 645 (LAQADSLTAIFASLNDEDLDVREYAISVAGRLSEKNPA), 737 to 775 (QYIPELMPLIVEALMDGAAVAKREVAVSTLGQVVQSTGY), and 781 to 819 (KEYPLLLGLLLKLLKGDLVWSTRREVLKVLGIMGALDPH). Residues 823–847 (RNQQSLSGSHGEVPRGTGDSGQPIP) form a disordered region. HEAT repeat units lie at residues 866 to 904 (YYSTVAINSLMRILRDASLLSYHKRVVRSLMIIFKSMGL), 908 to 945 (PYLPKVLPELFHTVRTSDENLKDFITWGLGTLVSIVRQ), 952 to 992 (PELL…ALND), 996 to 1036 (TYLP…GTLD), 1037 to 1075 (EHMHLLLPALIRLFKVDAPVAIRRDAIKTLTRVIPCVQV), and 1077 to 1114 (GHISALVHHLKLVLDGKNDELRKDAVDALCCLAHALGE). Residues 1179–1204 (DPFEEGTDRNHQVNDGRLRTAGEASQ) form a disordered region. Basic and acidic residues predominate over residues 1184–1198 (GTDRNHQVNDGRLRT). The FAT domain maps to 1309-1887 (LLGALAEKCR…MYPLLVACKS (579 aa)). 2 short sequence motifs (nuclear localization signal) span residues 1505–1512 (VRRAKYDE) and 2075–2080 (KQRPRK). The PI3K/PI4K catalytic domain occupies 2065–2378 (FSRQLVVITS…DEDPADIDLP (314 aa)). The G-loop stretch occupies residues 2071 to 2077 (VITSKQR). Residues 2244–2252 (GLGDRHPSN) form a catalytic loop region. An activation loop region spans residues 2264–2289 (HIDFGDCFEASMNREKFPEKVPFRLT). Residues 2354–2384 (NNNPNAPADVEPDEEDEDPADIDLPQPQRST) are disordered. Residues 2363–2374 (VEPDEEDEDPAD) are compositionally biased toward acidic residues. Position 2424 is a phosphoserine (serine 2424). The FATC domain occupies 2449 to 2481 (HGLSVKVQVQKLINQATSHENLCQNYVGWCPFW).

The protein belongs to the PI3/PI4-kinase family. Interacts with RAPTOR1 and itself. Interacts with FKBP12 in a rapamycin-dependent manner. Binds to LST8-1. Hyperactivated upon interaction with cauliflower mosaic virus (CaMV) Tav protein. Post-translationally, activated by phosphorylation on Ser-2424 triggered by cauliflower mosaic virus P6 and auxin. As to expression, highly expressed in root meristems, shoot apical meristem (SAM) and floral buds.

It localises to the cytoplasm. It is found in the nucleus. It carries out the reaction L-seryl-[protein] + ATP = O-phospho-L-seryl-[protein] + ADP + H(+). The enzyme catalyses L-threonyl-[protein] + ATP = O-phospho-L-threonyl-[protein] + ADP + H(+). Its activity is regulated as follows. Almost insensitive to rapamycin. Strongly repressed by specific active site inhibitors (asTORis) such as AZD-8055, TORIN2 and WYE-132, and, to a lesser extent, by KU63794, WYE-354 and TORIN1, leading to impaired photoautotrophic growth and abnormally early meristematic cells differentiation. Repression by TORIN1 leads to impaired responses to auxin, including gravitropism. Combined treatment with rapamycin and active-site inhibitors (e.g. Torin1 and AZD-8055) results in synergistic inhibition of activity and plant growth. Inhibition by KU63794 leads to reduced auxin content in root tips. AZD-8055 treatment reduces abscisic acid (ABA) levels. In addition, inhibition by AZD-8055 leads to a strong reduction of watermelon mosaic virus (WMV) infection. Its function is as follows. Essential cell growth regulator that controls development from early embryo to seed production. Controls plant growth in environmental stress conditions. Acts through the phosphorylation of downstream effectors that are recruited by the binding partner RAPTOR. Acts by activating transcription, protein synthesis and ribosome biogenesis, and inhibiting mRNA degradation and autophagy. Can phosphorylate TAP46, a regulatory subunit of protein phosphatase 2A that modulates cell growth and survival. Involved in modulating the transition from heterotrophic to photoautotrophic growth by regulating the expression of chloroplast- and photosynthesis-associated genes. Essential for auxin signaling transduction, probably acting in polysomes to maintain the active ATPK1/S6K1 (and thus TIF3H1/eIF3h) phosphorylation status that is critical for translation reinitiation (e.g. uORF-mRNAs loading). Promotes abscisic acid (ABA) biosynthesis. Involved in the regulation of sugar-mediated (e.g. glucose and sucrose) glycolysis- and mitochondrial bioenergetics-dependent root growth promotion. Required for sugar (e.g. glucose) promotion of hypocotyl elongation in the dark, by activating the brassinosteroid pathway and stabilizing BZR1. The regulation of BZR1 degradation is dependent on autophagy. Regulates the expression, phosphorylation and ribosome association of MRFs (e.g. MRF1, MRF3 and MRF4), especially under energy-deficient conditions. (Microbial infection) Binding to cauliflower mosaic virus (CaMV) Tav protein is critical for both translation reinitiation and viral fitness. When activated by CaMV P6, promotes CaMV translation by inhibiting cellular autophagy and suppressing both silencing and innate immunity, thus conferring sensitivity to P.syringae. In terms of biological role, (Microbial infection) Required during infection by some potyvirus such as Watermelon mosaic virus (WMV) but not for turnip mosaic virus (TuMV). This chain is Serine/threonine-protein kinase TOR, found in Arabidopsis thaliana (Mouse-ear cress).